Here is a 605-residue protein sequence, read N- to C-terminus: ATP-dependent RNA helicase DBP3 (605 aa).

The interval 1-124 is disordered; the sequence is MSAEELVASP…TPALSKKQQK (124 aa). Positions 54-66 are enriched in basic residues; that stretch reads KDKKDKKEKKDKK. Residues 104 to 114 are compositionally biased toward polar residues; sequence PVSTATPTESE. A Q motif motif is present at residues 175-201; sequence LSIRDLPINSKLQPFLNKFEKPTPIQA. One can recognise a Helicase ATP-binding domain in the interval 204–391; it reads WPALLSKKDV…STFLNNPLRI (188 aa). Residue 217 to 224 coordinates ATP; that stretch reads AETGSGKT. A DEAD box motif is present at residues 336–339; that stretch reads DEAD. Residues 424–575 enclose the Helicase C-terminal domain; sequence HLKAHLKVHP…EIPKEMDRFP (152 aa).

It belongs to the DEAD box helicase family. DDX5/DBP2 subfamily.

The protein resides in the nucleus. It is found in the nucleolus. It catalyses the reaction ATP + H2O = ADP + phosphate + H(+). In terms of biological role, ATP-dependent RNA helicase required for 60S ribosomal subunit synthesis. Involved in efficient pre-rRNA processing, predominantly at site A3, which is necessary for the normal formation of 25S and 5.8S rRNAs. The sequence is that of ATP-dependent RNA helicase DBP3 (DBP3) from Cryptococcus neoformans var. neoformans serotype D (strain JEC21 / ATCC MYA-565) (Filobasidiella neoformans).